The chain runs to 182 residues: MQTEHVILLNAQGVPTGTLEKYAAHTADTLLHLAFSSWLFNAKGQLLVTRRALSKKAWPGVWTNSVCGHPQMGESNEDAVIRRCRFELGVEITAPEPVYPDFRYRATDPNGIVENEVCPVFAARTTSALQINDDEVMDYQWCDLADVLRGIDATPWAFSPWMVMQAANSEARKLLSAFAQHN.

Mn(2+) contacts are provided by His-25 and His-32. Residues 30–164 enclose the Nudix hydrolase domain; the sequence is LLHLAFSSWL…PWAFSPWMVM (135 aa). The active site involves Cys-67. Residue His-69 participates in Mn(2+) binding. Glu-87 contributes to the Mg(2+) binding site. Positions 114 and 116 each coordinate Mn(2+). The active site involves Glu-116.

It belongs to the IPP isomerase type 1 family. Homodimer. Requires Mg(2+) as cofactor. Mn(2+) is required as a cofactor.

Its subcellular location is the cytoplasm. The catalysed reaction is isopentenyl diphosphate = dimethylallyl diphosphate. Its pathway is isoprenoid biosynthesis; dimethylallyl diphosphate biosynthesis; dimethylallyl diphosphate from isopentenyl diphosphate: step 1/1. Functionally, catalyzes the 1,3-allylic rearrangement of the homoallylic substrate isopentenyl (IPP) to its highly electrophilic allylic isomer, dimethylallyl diphosphate (DMAPP). The chain is Isopentenyl-diphosphate Delta-isomerase from Escherichia coli O17:K52:H18 (strain UMN026 / ExPEC).